A 409-amino-acid polypeptide reads, in one-letter code: Autophagy-related protein 21 (409 aa).

4 WD repeats span residues 1-35 (MKVL…KCFE), 221-261 (VHKG…TLQS), 273-312 (TRPC…QQNK), and 361-402 (KVDD…GECI). Residues 269–273 (FRRGT) carry the L/FRRG motif motif.

It belongs to the WD repeat PROPPIN family.

It localises to the cytoplasm. Its subcellular location is the membrane. The protein localises to the vacuole membrane. In terms of biological role, required for cytoplasm to vacuole transport (Cvt) vesicles formation and mitophagy. Involved in binding of phosphatidylethanolamine to ATG8 and in recruitment of ATG8 and ATG5 to the pre-autophagosomal structure. Protects ATG8 from ARG4-mediated cleavage. This is Autophagy-related protein 21 (ATG21) from Eremothecium gossypii (strain ATCC 10895 / CBS 109.51 / FGSC 9923 / NRRL Y-1056) (Yeast).